Here is a 116-residue protein sequence, read N- to C-terminus: Large ribosomal subunit protein bL20 (116 aa).

The protein belongs to the bacterial ribosomal protein bL20 family.

Binds directly to 23S ribosomal RNA and is necessary for the in vitro assembly process of the 50S ribosomal subunit. It is not involved in the protein synthesizing functions of that subunit. This chain is Large ribosomal subunit protein bL20, found in Helicobacter pylori (strain HPAG1).